A 388-amino-acid chain; its full sequence is S-adenosylmethionine synthase (388 aa).

H17 lines the ATP pocket. D19 is a Mg(2+) binding site. Residue E45 coordinates K(+). E58 and Q101 together coordinate L-methionine. The flexible loop stretch occupies residues 101–111 (QSPDIGQGVDT). ATP is bound by residues 160-162 (DGK), 226-227 (RF), D235, 241-242 (RK), A258, and K262. L-methionine is bound at residue D235. K266 provides a ligand contact to L-methionine.

The protein belongs to the AdoMet synthase family. As to quaternary structure, homotetramer; dimer of dimers. Requires Mg(2+) as cofactor. K(+) is required as a cofactor.

It localises to the cytoplasm. The catalysed reaction is L-methionine + ATP + H2O = S-adenosyl-L-methionine + phosphate + diphosphate. It functions in the pathway amino-acid biosynthesis; S-adenosyl-L-methionine biosynthesis; S-adenosyl-L-methionine from L-methionine: step 1/1. Catalyzes the formation of S-adenosylmethionine (AdoMet) from methionine and ATP. The overall synthetic reaction is composed of two sequential steps, AdoMet formation and the subsequent tripolyphosphate hydrolysis which occurs prior to release of AdoMet from the enzyme. The protein is S-adenosylmethionine synthase of Anaeromyxobacter sp. (strain K).